The following is a 460-amino-acid chain: MTQSQTVTVDQQEILNRANEVEAPMADPPTDVPITPCELTAAKNAAQQLVLSADNMREYLAAGAKERQRLATSLRNAAKAYGEVDEEAATALDNDGEGTVQAESAGAVGGDSSAELTDTPRVATAGEPNFMDLKEAARKLETGDQGASLAHFADGWNTFNLTLQGDVKRFRGFDNWEGDAATACEASLDQQRQWILHMAKLSAAMAKQAQYVAQLHVWARREHPTYEDIVGLERLYAENPSARDQILPVYAEYQQRSEKVLTEYNNKAALEPVNPPKPPPAIKIDPPPPPQEQGLIPGFLMPPSDGSGVTPGTGMPAAPMVPPTGSPGGGLPADTAAQLTSAGREAAALSGDVAVKAASLGGGGGGGVPSAPLGSAIGGAESVRPAGAGDIAGLGQGRAGGGAALGGGGMGMPMGAAHQGQGGAKSKGSQQEDEALYTEDRAWTEAVIGNRRRQDSKESK.

Disordered regions lie at residues 92-116, 303-335, and 405-441; these read LDND…SAEL, PSDG…PADT, and LGGG…TEDR.

In terms of processing, cleaved in the C-terminal region by MycP1.

It localises to the secreted. This chain is ESX-1 secretion-associated protein EspB, found in Mycobacterium tuberculosis (strain CDC 1551 / Oshkosh).